A 505-amino-acid chain; its full sequence is Putative ribose/galactose/methyl galactoside import ATP-binding protein 1 (505 aa).

ABC transporter domains lie at 10-245 (LRLE…VGRS) and 256-501 (RPTD…SGYG). Residue 42–49 (GENGAGKS) coordinates ATP.

Belongs to the ABC transporter superfamily. Carbohydrate importer 2 (CUT2) (TC 3.A.1.2) family.

Its subcellular location is the cell inner membrane. It catalyses the reaction D-ribose(out) + ATP + H2O = D-ribose(in) + ADP + phosphate + H(+). The catalysed reaction is D-galactose(out) + ATP + H2O = D-galactose(in) + ADP + phosphate + H(+). Part of an ABC transporter complex involved in carbohydrate import. Could be involved in ribose, galactose and/or methyl galactoside import. Responsible for energy coupling to the transport system. This Agrobacterium fabrum (strain C58 / ATCC 33970) (Agrobacterium tumefaciens (strain C58)) protein is Putative ribose/galactose/methyl galactoside import ATP-binding protein 1.